A 219-amino-acid chain; its full sequence is Leukocyte surface antigen CD53 (219 aa).

At 1 to 11 the chain is on the cytoplasmic side; sequence MGMSSLKLLKY. The helical transmembrane segment at 12–32 threads the bilayer; it reads VLFFFNLLFWICGCCILGFGI. At 33–54 the chain is on the extracellular side; sequence YLLIHNNFGVLFHNLPSLTLGN. Residues 55–69 traverse the membrane as a helical segment; it reads VFVIVGSIIMVVAFL. Topologically, residues 70–80 are cytoplasmic; that stretch reads GCMGSIKENKC. A helical membrane pass occupies residues 81–106; the sequence is LLMSFFILLLIILLAEVTLAILLFVY. The Extracellular segment spans residues 107–181; that stretch reads EQKLNEYVAK…AKARLWFHSN (75 aa). N-linked (GlcNAc...) asparagine glycans are attached at residues N129 and N148. A helical transmembrane segment spans residues 182–206; the sequence is FLYIGIITICVCVIEVLGMSFALTL. The Cytoplasmic segment spans residues 207-219; it reads NCQIDKTSQTIGL.

It belongs to the tetraspanin (TM4SF) family. As to quaternary structure, interacts with SCIMP. Interacts with CD45/PTPRC. Interacts with IL7R. Interacts with RBL2 and PPP2CA. B-cells, monocytes, macrophages, neutrophils, single (CD4 or CD8) positive thymocytes and peripheral T-cells.

Its subcellular location is the cell membrane. It localises to the cell junction. The protein localises to the membrane. The protein resides in the synapse. Functionally, structural component of specialized membrane microdomains known as tetraspanin-enriched microdomains (TERMs), which act as platforms for receptor clustering and signaling. Participates thereby in diverse biological functions such as cell signal transduction, adhesion, migration and protein trafficking. Plays a role in the activation of monocytes and B-cells. Acts as an essential regulator of B-cell development by promoting interleukin-7 receptor/IL7R signaling. Also promotes, in B-cells, the BCR signaling by recruiting PKC to the plasma membrane in order to phosphorylate its substrates. Plays an essential role in B- and T-cells homing to lymph nodes by stabilizing L-selectin/SELL cell surface expression. Also mediates metabolic and inflammatory functions in hepatocytes and adipose tissue by promoting TNF-alpha and LPS signaling independent of the immune compartment. This Homo sapiens (Human) protein is Leukocyte surface antigen CD53 (CD53).